A 178-amino-acid chain; its full sequence is RNA replicase polyprotein (178 aa).

Belongs to the tymovirus NS35 RNA replicase polyprotein family.

It catalyses the reaction RNA(n) + a ribonucleoside 5'-triphosphate = RNA(n+1) + diphosphate. The sequence is that of RNA replicase polyprotein from Physalis heterophylla (PhMV).